The following is a 71-amino-acid chain: Large ribosomal subunit protein bL31 (71 aa).

Belongs to the bacterial ribosomal protein bL31 family. Type A subfamily. As to quaternary structure, part of the 50S ribosomal subunit.

In terms of biological role, binds the 23S rRNA. This Mycoplasmopsis synoviae (strain 53) (Mycoplasma synoviae) protein is Large ribosomal subunit protein bL31 (rpmE).